The chain runs to 359 residues: Protein FAM50 homolog (359 aa).

Disordered regions lie at residues 122-150 (NLDDDEEEEEEDDEDHDKKQLKIKQEDQP) and 339-359 (PYDPTKSYDKYTIKDKDKSKK). Positions 123-136 (LDDDEEEEEEDDED) are enriched in acidic residues. The span at 137–150 (HDKKQLKIKQEDQP) shows a compositional bias: basic and acidic residues.

The protein belongs to the FAM50 family.

The polypeptide is Protein FAM50 homolog (Drosophila melanogaster (Fruit fly)).